Reading from the N-terminus, the 245-residue chain is tRNA (guanine-N(7)-)-methyltransferase (245 aa).

S-adenosyl-L-methionine-binding residues include glutamate 75, glutamate 100, aspartate 127, and aspartate 149. Aspartate 149 is a catalytic residue. Substrate-binding positions include lysine 153, aspartate 185, and 222–225; that span reads TKFE.

The protein belongs to the class I-like SAM-binding methyltransferase superfamily. TrmB family.

The catalysed reaction is guanosine(46) in tRNA + S-adenosyl-L-methionine = N(7)-methylguanosine(46) in tRNA + S-adenosyl-L-homocysteine. It participates in tRNA modification; N(7)-methylguanine-tRNA biosynthesis. In terms of biological role, catalyzes the formation of N(7)-methylguanine at position 46 (m7G46) in tRNA. The polypeptide is tRNA (guanine-N(7)-)-methyltransferase (Acinetobacter baylyi (strain ATCC 33305 / BD413 / ADP1)).